We begin with the raw amino-acid sequence, 199 residues long: Probable nicotinate-nucleotide adenylyltransferase (199 aa).

The protein belongs to the NadD family.

The enzyme catalyses nicotinate beta-D-ribonucleotide + ATP + H(+) = deamido-NAD(+) + diphosphate. It participates in cofactor biosynthesis; NAD(+) biosynthesis; deamido-NAD(+) from nicotinate D-ribonucleotide: step 1/1. In terms of biological role, catalyzes the reversible adenylation of nicotinate mononucleotide (NaMN) to nicotinic acid adenine dinucleotide (NaAD). The protein is Probable nicotinate-nucleotide adenylyltransferase of Rhizobium johnstonii (strain DSM 114642 / LMG 32736 / 3841) (Rhizobium leguminosarum bv. viciae).